The chain runs to 105 residues: Large ribosomal subunit protein eL36 (105 aa).

Belongs to the eukaryotic ribosomal protein eL36 family. Component of the large ribosomal subunit.

The protein resides in the cytoplasm. It localises to the cytosol. Its function is as follows. Component of the large ribosomal subunit. The ribosome is a large ribonucleoprotein complex responsible for the synthesis of proteins in the cell. The chain is Large ribosomal subunit protein eL36 (rpl36) from Danio rerio (Zebrafish).